A 424-amino-acid polypeptide reads, in one-letter code: MLDIRVIRENVQWAKDKLATRGIDAAEIDEVVALDEKRRALIVRTEELKKNRNAASEAIAVAKRNKEDATEQIAAMKNVGAEIKELDAQLAEVKEKVDYILVRLPNFPDDSAPVGLDESFSREERKWSTPREFDFEPLAHWDIGEKLGILDFERAAKVSGSRFVYYKGAGARLERAVYNFMLDQHAKEGYEEMITPYLVNGESMFGTGQFPKFTEDVYTMTNEGEPMTLIPTAEVPLTNFYRDEILDGAQLPIYFTALSPAFRSEAGSAGRDTRGLIRMHQFNKVEMVKFTKPEESFNELEKMTADAENILKALNLPYHVITLATGDASFTSAKTYDIEVWLPAQNTYREISSCSDCTDFQARRAQIRYRDEDGHVNLVHTLNGSGLAVGRTVAAILENYQNEDGTVTIPEPLVPYMGGMTKIG.

232-234 is a binding site for L-serine; it reads TAE. Position 263-265 (263-265) interacts with ATP; sequence RSE. Residue E286 coordinates L-serine. Position 350-353 (350-353) interacts with ATP; it reads EISS. Residue S385 participates in L-serine binding.

Belongs to the class-II aminoacyl-tRNA synthetase family. Type-1 seryl-tRNA synthetase subfamily. In terms of assembly, homodimer. The tRNA molecule binds across the dimer.

It is found in the cytoplasm. The enzyme catalyses tRNA(Ser) + L-serine + ATP = L-seryl-tRNA(Ser) + AMP + diphosphate + H(+). The catalysed reaction is tRNA(Sec) + L-serine + ATP = L-seryl-tRNA(Sec) + AMP + diphosphate + H(+). It functions in the pathway aminoacyl-tRNA biosynthesis; selenocysteinyl-tRNA(Sec) biosynthesis; L-seryl-tRNA(Sec) from L-serine and tRNA(Sec): step 1/1. Catalyzes the attachment of serine to tRNA(Ser). Is also able to aminoacylate tRNA(Sec) with serine, to form the misacylated tRNA L-seryl-tRNA(Sec), which will be further converted into selenocysteinyl-tRNA(Sec). This Latilactobacillus sakei subsp. sakei (strain 23K) (Lactobacillus sakei subsp. sakei) protein is Serine--tRNA ligase.